The sequence spans 333 residues: Ketol-acid reductoisomerase (NADP(+)) (333 aa).

The KARI N-terminal Rossmann domain occupies Ala2–Thr182. Residues Phe25 to Gln28, Ser51, Ser53, and Asp83 to Gln86 contribute to the NADP(+) site. The active site involves His108. Gly134 serves as a coordination point for NADP(+). In terms of domain architecture, KARI C-terminal knotted spans Thr183–Ile328. Positions 191, 195, 227, and 231 each coordinate Mg(2+). Ser252 is a substrate binding site.

The protein belongs to the ketol-acid reductoisomerase family. It depends on Mg(2+) as a cofactor.

It catalyses the reaction (2R)-2,3-dihydroxy-3-methylbutanoate + NADP(+) = (2S)-2-acetolactate + NADPH + H(+). The enzyme catalyses (2R,3R)-2,3-dihydroxy-3-methylpentanoate + NADP(+) = (S)-2-ethyl-2-hydroxy-3-oxobutanoate + NADPH + H(+). It participates in amino-acid biosynthesis; L-isoleucine biosynthesis; L-isoleucine from 2-oxobutanoate: step 2/4. The protein operates within amino-acid biosynthesis; L-valine biosynthesis; L-valine from pyruvate: step 2/4. Its function is as follows. Involved in the biosynthesis of branched-chain amino acids (BCAA). Catalyzes an alkyl-migration followed by a ketol-acid reduction of (S)-2-acetolactate (S2AL) to yield (R)-2,3-dihydroxy-isovalerate. In the isomerase reaction, S2AL is rearranged via a Mg-dependent methyl migration to produce 3-hydroxy-3-methyl-2-ketobutyrate (HMKB). In the reductase reaction, this 2-ketoacid undergoes a metal-dependent reduction by NADPH to yield (R)-2,3-dihydroxy-isovalerate. This chain is Ketol-acid reductoisomerase (NADP(+)), found in Caldicellulosiruptor bescii (strain ATCC BAA-1888 / DSM 6725 / KCTC 15123 / Z-1320) (Anaerocellum thermophilum).